The following is a 556-amino-acid chain: Dihydroxy-acid dehydratase (556 aa).

A [2Fe-2S] cluster-binding site is contributed by C47. Residue D79 coordinates Mg(2+). [2Fe-2S] cluster is bound at residue C120. Mg(2+) contacts are provided by D121 and K122. N6-carboxylysine is present on K122. C192 serves as a coordination point for [2Fe-2S] cluster. A Mg(2+)-binding site is contributed by E444. The Proton acceptor role is filled by S470.

Belongs to the IlvD/Edd family. In terms of assembly, homodimer. The cofactor is [2Fe-2S] cluster. Mg(2+) serves as cofactor.

The enzyme catalyses (2R)-2,3-dihydroxy-3-methylbutanoate = 3-methyl-2-oxobutanoate + H2O. The catalysed reaction is (2R,3R)-2,3-dihydroxy-3-methylpentanoate = (S)-3-methyl-2-oxopentanoate + H2O. The protein operates within amino-acid biosynthesis; L-isoleucine biosynthesis; L-isoleucine from 2-oxobutanoate: step 3/4. It functions in the pathway amino-acid biosynthesis; L-valine biosynthesis; L-valine from pyruvate: step 3/4. Its function is as follows. Functions in the biosynthesis of branched-chain amino acids. Catalyzes the dehydration of (2R,3R)-2,3-dihydroxy-3-methylpentanoate (2,3-dihydroxy-3-methylvalerate) into 2-oxo-3-methylpentanoate (2-oxo-3-methylvalerate) and of (2R)-2,3-dihydroxy-3-methylbutanoate (2,3-dihydroxyisovalerate) into 2-oxo-3-methylbutanoate (2-oxoisovalerate), the penultimate precursor to L-isoleucine and L-valine, respectively. This Prochlorococcus marinus (strain MIT 9211) protein is Dihydroxy-acid dehydratase.